The sequence spans 236 residues: Adenosine 5'-phosphosulfate reductase 2 (236 aa).

[4Fe-4S] cluster is bound by residues Cys-122, Cys-123, Cys-205, and Cys-208. The interval Asn-216–Glu-236 is disordered. Cys-231 serves as the catalytic Nucleophile; cysteine thiosulfonate intermediate.

The protein belongs to the PAPS reductase family. CysH subfamily. It depends on [4Fe-4S] cluster as a cofactor.

The protein localises to the cytoplasm. It carries out the reaction [thioredoxin]-disulfide + sulfite + AMP + 2 H(+) = adenosine 5'-phosphosulfate + [thioredoxin]-dithiol. Its pathway is sulfur metabolism; hydrogen sulfide biosynthesis; sulfite from sulfate. Functionally, catalyzes the formation of sulfite from adenosine 5'-phosphosulfate (APS) using thioredoxin as an electron donor. The chain is Adenosine 5'-phosphosulfate reductase 2 from Bacillus subtilis (strain 168).